The primary structure comprises 335 residues: Olfactory receptor 10R2 (335 aa).

Over 1–45 (MPQILIFTYLNMFYFFPPLQILAENLTMVTEFLLLGFSSLGEIQL) the chain is Extracellular. Asparagine 25 carries N-linked (GlcNAc...) asparagine glycosylation. A helical membrane pass occupies residues 46-66 (ALFVVFLFLYLVILSGNVTII). At 67–74 (SVIHLDKS) the chain is on the cytoplasmic side. Residues 75–95 (LHTPMYFFLGILSTSETFYTF) form a helical membrane-spanning segment. At 96 to 119 (VILPKMLINLLSVARTISFNCCAL) the chain is on the extracellular side. Cysteine 117 and cysteine 209 form a disulfide bridge. Residues 120–140 (QMFFFLGFAITNCLLLGVMGY) traverse the membrane as a helical segment. Topologically, residues 141-159 (DRYAAICHPLHYPTLMSWQ) are cytoplasmic. Residues 160–180 (VCGKLAAACAIGGFLASLTVV) traverse the membrane as a helical segment. The Extracellular segment spans residues 181–217 (NLVFSLPFCSANKVNHYFCDISAVILLACTNTDVNEF). Residues 218–237 (VIFICGVLVLVVPFLFICVS) traverse the membrane as a helical segment. Over 238–257 (YLCILRTILKIPSAEGRRKA) the chain is Cytoplasmic. The helical transmembrane segment at 258 to 278 (FSTCASHLSVVIVHYGCASFI) threads the bilayer. Residues 279-291 (YLRPTANYVSNKD) are Extracellular-facing. A helical membrane pass occupies residues 292–312 (RLVTVTYTIVTPLLNPMVYSL). At 313 to 335 (RNKDVQLAIRKVLGKKGSLKLYN) the chain is on the cytoplasmic side.

The protein belongs to the G-protein coupled receptor 1 family.

The protein localises to the cell membrane. In terms of biological role, odorant receptor. The sequence is that of Olfactory receptor 10R2 (OR10R2) from Homo sapiens (Human).